The primary structure comprises 173 residues: Siroheme decarboxylase alpha subunit (173 aa).

Residues H115 and R119 each contribute to the substrate site.

The protein belongs to the Ahb/Nir family. As to quaternary structure, forms a heterodimer composed of AhbA and AhbB.

The catalysed reaction is siroheme + 2 H(+) = 12,18-didecarboxysiroheme + 2 CO2. It functions in the pathway porphyrin-containing compound metabolism; protoheme biosynthesis. Its function is as follows. Involved in siroheme-dependent heme b biosynthesis. Catalyzes the decarboxylation of siroheme into didecarboxysiroheme. Siroheme is decarboxylated to monodecarboxysiroheme, which is in turn decarboxylated to didecarboxysiroheme. The polypeptide is Siroheme decarboxylase alpha subunit (Desulfovibrio desulfuricans (strain ATCC 27774 / DSM 6949 / MB)).